The primary structure comprises 292 residues: MASLKDMRVRIASTKATQKITKAMQMVAASKLRRAQLAAEAARPYAERMDAVISNIASAAAGSPGAPVLLAGTGKDQVHLLLVCTGERGLSGAFNSSIVRLARERALSLMNQGKEVKLFCVGRKGYEQLRRTFDRQIVENIELRSVRQLGFVNAEDIAHKVVARFNNGEFDVCTLFYSRFKSVISQIPTAQQIIPLVVEAPAANAGPATSYEYEPEEDEILAGLLPRNLAVQIFRALLENNASFYGAQMSAMDNATRNAGDMIRKQTLIYNRTRQAMITKELIEIISGAEAI.

This sequence belongs to the ATPase gamma chain family. As to quaternary structure, F-type ATPases have 2 components, CF(1) - the catalytic core - and CF(0) - the membrane proton channel. CF(1) has five subunits: alpha(3), beta(3), gamma(1), delta(1), epsilon(1). CF(0) has three main subunits: a, b and c.

It localises to the cell inner membrane. Functionally, produces ATP from ADP in the presence of a proton gradient across the membrane. The gamma chain is believed to be important in regulating ATPase activity and the flow of protons through the CF(0) complex. In Rhodopseudomonas palustris (strain BisB18), this protein is ATP synthase gamma chain.